A 92-amino-acid chain; its full sequence is Small ribosomal subunit protein uS19 (92 aa).

This sequence belongs to the universal ribosomal protein uS19 family.

Its function is as follows. Protein S19 forms a complex with S13 that binds strongly to the 16S ribosomal RNA. This chain is Small ribosomal subunit protein uS19, found in Sulfurovum sp. (strain NBC37-1).